We begin with the raw amino-acid sequence, 710 residues long: NAD(P)H-quinone oxidoreductase subunit 5, chloroplastic (710 aa).

17 helical membrane passes run 9–29 (WIIPFVPLLVPMLIGAGLLIF), 40–60 (WSFQSVLLLSIVMAFSIYLSI), 89–109 (IDPLTSIMSILVTTVGILVLI), 125–145 (FTYMSFFCAAMLGLVTSSNFI), 147–167 (IYIFWELVGLCSYLLIGFWFT), 185–205 (GDFGLLLGILGFYWITGSFEF), 221–241 (VNLLFVTLCAALLFVGAIAKS), 258–278 (TPISALIHAATLVAAGIFLVA), 280–300 (LLPLFLVIPYIMYFISLIGII), 327–347 (LGYMMVALGMGSYRSALFHLI), 354–374 (ALLFLAAGSVIHSMETIIGYS), 396–416 (GAFLLGTLSLCGIPPLACFWS), 425–445 (WLYSPIFALIAWGTVGLTAFY), 519–539 (MLFPQILLCFVTFVIGFLGIP), 571–591 (FLKHTVISGGIAYCGIFIAFL), 657–676 (SFDLRIIDQIFNCFAFLSFI), and 689–709 (IPFYLFFYFFFVSIFIFLFYK).

The protein belongs to the complex I subunit 5 family. In terms of assembly, NDH is composed of at least 16 different subunits, 5 of which are encoded in the nucleus.

The protein localises to the plastid. The protein resides in the chloroplast thylakoid membrane. The catalysed reaction is a plastoquinone + NADH + (n+1) H(+)(in) = a plastoquinol + NAD(+) + n H(+)(out). It carries out the reaction a plastoquinone + NADPH + (n+1) H(+)(in) = a plastoquinol + NADP(+) + n H(+)(out). NDH shuttles electrons from NAD(P)H:plastoquinone, via FMN and iron-sulfur (Fe-S) centers, to quinones in the photosynthetic chain and possibly in a chloroplast respiratory chain. The immediate electron acceptor for the enzyme in this species is believed to be plastoquinone. Couples the redox reaction to proton translocation, and thus conserves the redox energy in a proton gradient. This is NAD(P)H-quinone oxidoreductase subunit 5, chloroplastic (ndhF) from Ipomoea purpurea (Common morning glory).